A 359-amino-acid polypeptide reads, in one-letter code: Threonine dehydratase biosynthetic, chloroplastic (359 aa).

ACT-like domains follow at residues 184 to 256 and 278 to 349; these read ALLA…NFSH and IFGE…LDNS.

The protein belongs to the serine/threonine dehydratase family. Homotetramer. The cofactor is pyridoxal 5'-phosphate. In terms of tissue distribution, floral buds of untreated plants. After ABA treatment or mechanical wounding is mostly accumulated in leaves, to a lesser extent in stems, but not in roots. Expressed in anthers, carpel leaves, pith cells, sepals and petals. Not expressed in stomium, vascular bundles, epidermal cells or pollen mother cells.

The protein localises to the plastid. It localises to the chloroplast. The enzyme catalyses L-threonine = 2-oxobutanoate + NH4(+). It participates in amino-acid biosynthesis; L-isoleucine biosynthesis; 2-oxobutanoate from L-threonine: step 1/1. The protein is Threonine dehydratase biosynthetic, chloroplastic of Solanum tuberosum (Potato).